Here is a 606-residue protein sequence, read N- to C-terminus: Anthranilate synthase alpha subunit 2, chloroplastic (606 aa).

The N-terminal 49 residues, 1–49, are a transit peptide targeting the chloroplast; it reads MESIAAATFTPSRLAARPATPAAAAAPVRARAAVAAGGRRRTSRRGGVR.

Belongs to the anthranilate synthase component I family. As to quaternary structure, heterotetramer consisting of two non-identical subunits: a beta subunit and a large alpha subunit.

Its subcellular location is the plastid. The protein resides in the chloroplast. The catalysed reaction is chorismate + L-glutamine = anthranilate + pyruvate + L-glutamate + H(+). It functions in the pathway amino-acid biosynthesis; L-tryptophan biosynthesis; L-tryptophan from chorismate: step 1/5. Its activity is regulated as follows. Feedback inhibition by tryptophan. Functionally, part of a heterotetrameric complex that catalyzes the two-step biosynthesis of anthranilate, an intermediate in the biosynthesis of L-tryptophan. In the first step, the glutamine-binding beta subunit of anthranilate synthase (AS) provides the glutamine amidotransferase activity which generates ammonia as a substrate that, along with chorismate, is used in the second step, catalyzed by the large alpha subunit of AS to produce anthranilate. This is Anthranilate synthase alpha subunit 2, chloroplastic from Oryza sativa subsp. japonica (Rice).